An 80-amino-acid polypeptide reads, in one-letter code: Defensin-like protein 1 (80 aa).

The signal sequence occupies residues M1–A29. Q30 is modified (pyrrolidone carboxylic acid). Intrachain disulfides connect C33/C80, C44/C65, C50/C74, and C54/C76.

It belongs to the DEFL family. In terms of assembly, forms oligomers in its native state.

The protein resides in the secreted. Functionally, possesses antifungal activity sensitive to inorganic cations. The sequence is that of Defensin-like protein 1 (AFP1) from Raphanus sativus (Radish).